The sequence spans 447 residues: Growth/differentiation factor 7 (447 aa).

The first 19 residues, 1–19 (MDLSAAAALCLWLLSACRP), serve as a signal peptide directing secretion. The propeptide occupies 20 to 318 (RDGLEAAAVL…AVTAGRRRRR (299 aa)). Asn80 carries N-linked (GlcNAc...) asparagine glycosylation. The segment at 292–346 (LAAQPPPDPGTGTGSPRAVTAGRRRRRTALAGTRTAQGSGGGAGRGHGRRGRSRC) is disordered. Residues 337-346 (GHGRRGRSRC) show a composition bias toward basic residues. Cystine bridges form between Cys346/Cys412, Cys375/Cys444, and Cys379/Cys446.

Belongs to the TGF-beta family. Homodimer; disulfide-linked. In terms of tissue distribution, highly expressed in the primary aera of brain neocortex.

The protein resides in the secreted. May play an active role in the motor area of the primate neocortex. This chain is Growth/differentiation factor 7 (GDF7), found in Chlorocebus aethiops (Green monkey).